A 315-amino-acid chain; its full sequence is Cobalamin biosynthesis protein CobD (315 aa).

Transmembrane regions (helical) follow at residues 48-68 (IAGF…TLGI), 77-97 (PILG…AKGL), 150-170 (DGII…AFLY), 200-220 (VFNY…SFIL), and 295-315 (MVSF…EVII).

Belongs to the CobD/CbiB family.

It is found in the cell membrane. The protein operates within cofactor biosynthesis; adenosylcobalamin biosynthesis. Its function is as follows. Converts cobyric acid to cobinamide by the addition of aminopropanol on the F carboxylic group. The sequence is that of Cobalamin biosynthesis protein CobD from Clostridium perfringens (strain 13 / Type A).